A 172-amino-acid polypeptide reads, in one-letter code: Adenine phosphoribosyltransferase (172 aa).

The protein belongs to the purine/pyrimidine phosphoribosyltransferase family. As to quaternary structure, homodimer.

The protein localises to the cytoplasm. The catalysed reaction is AMP + diphosphate = 5-phospho-alpha-D-ribose 1-diphosphate + adenine. It functions in the pathway purine metabolism; AMP biosynthesis via salvage pathway; AMP from adenine: step 1/1. Functionally, catalyzes a salvage reaction resulting in the formation of AMP, that is energically less costly than de novo synthesis. This chain is Adenine phosphoribosyltransferase, found in Prochlorococcus marinus (strain MIT 9215).